Reading from the N-terminus, the 129-residue chain is Protein Turandot A1 (129 aa).

Positions 1–21 (MNSSTALMCFALLLISPLCMG) are cleaved as a signal peptide. Residue Asn49 is glycosylated (N-linked (GlcNAc...) asparagine).

Belongs to the Turandot family.

The protein resides in the secreted. A humoral factor that plays a role in stress tolerance; gives increased resistance to the lethal effects of bacterial challenge and stress. Regulated by the JAK/STAT pathway and NF-KB-like Relish pathway in the fat body, upd3 in the hemocytes and Mekk1 in response to septic injury and consequent immune response. The chain is Protein Turandot A1 (TotA1) from Drosophila simulans (Fruit fly).